We begin with the raw amino-acid sequence, 812 residues long: ATP-dependent DNA helicase PIF3 (812 aa).

Residue 247-254 coordinates ATP; that stretch reads GSAGTGKT. A DNA-binding region spans residues 741–761; the sequence is HLVYVACSRVRSMDQLIVRNV.

The protein belongs to the helicase family. PIF1 subfamily. In terms of assembly, monomer. Mg(2+) is required as a cofactor.

It localises to the cytoplasm. It carries out the reaction Couples ATP hydrolysis with the unwinding of duplex DNA at the replication fork by translocating in the 5'-3' direction. This creates two antiparallel DNA single strands (ssDNA). The leading ssDNA polymer is the template for DNA polymerase III holoenzyme which synthesizes a continuous strand.. The catalysed reaction is ATP + H2O = ADP + phosphate + H(+). Its function is as follows. DNA-dependent ATPase and 5'-3' DNA helicase required for the maintenance of genome stability. This is ATP-dependent DNA helicase PIF3 from Trypanosoma brucei brucei (strain 927/4 GUTat10.1).